Reading from the N-terminus, the 151-residue chain is S-protein homolog 74 (151 aa).

An N-terminal signal peptide occupies residues 1-25 (MNYIKQFILAICFYLVLTCQDHVLA).

Belongs to the plant self-incompatibility (S1) protein family.

It localises to the secreted. The protein is S-protein homolog 74 of Arabidopsis thaliana (Mouse-ear cress).